The primary structure comprises 76 residues: DNA-directed RNA polymerase subunit Rpo10 (76 aa).

Zn(2+) contacts are provided by Cys16, Cys19, Cys53, and Cys54.

Belongs to the archaeal Rpo10/eukaryotic RPB10 RNA polymerase subunit family. In terms of assembly, part of the RNA polymerase complex. The cofactor is Zn(2+).

Its subcellular location is the cytoplasm. The catalysed reaction is RNA(n) + a ribonucleoside 5'-triphosphate = RNA(n+1) + diphosphate. Its function is as follows. DNA-dependent RNA polymerase (RNAP) catalyzes the transcription of DNA into RNA using the four ribonucleoside triphosphates as substrates. The sequence is that of DNA-directed RNA polymerase subunit Rpo10 from Archaeoglobus fulgidus (strain ATCC 49558 / DSM 4304 / JCM 9628 / NBRC 100126 / VC-16).